The primary structure comprises 156 residues: Snaclec A10 (156 aa).

Residues Met1–Ala23 form the signal peptide. Disulfide bonds link Cys27–Cys38, Cys55–Cys154, and Cys129–Cys146. One can recognise a C-type lectin domain in the interval Tyr34–Glu155.

The protein belongs to the snaclec family. Heterodimer; disulfide-linked. In terms of tissue distribution, expressed by the venom gland.

It is found in the secreted. Interferes with one step of hemostasis (modulation of platelet aggregation, or coagulation cascade, for example). This chain is Snaclec A10, found in Macrovipera lebetinus (Levantine viper).